Consider the following 244-residue polypeptide: Uracil phosphoribosyltransferase (244 aa).

Residues K59, R68, and 102 to 105 (YSKI) contribute to the GTP site. 5-phospho-alpha-D-ribose 1-diphosphate is bound at residue R112. A GTP-binding site is contributed by R129. R137 serves as a coordination point for 5-phospho-alpha-D-ribose 1-diphosphate. R158 provides a ligand contact to GTP. Residues D164 and 164-172 (DPMCATAGS) each bind 5-phospho-alpha-D-ribose 1-diphosphate. Residues I229 and 234–236 (GDF) contribute to the uracil site. D235 provides a ligand contact to 5-phospho-alpha-D-ribose 1-diphosphate.

This sequence belongs to the UPRTase family. In terms of assembly, monomer. Forms homodimers in presence of substrates and homotetramers in the presence of GTP. Mg(2+) is required as a cofactor.

It catalyses the reaction UMP + diphosphate = 5-phospho-alpha-D-ribose 1-diphosphate + uracil. The protein operates within pyrimidine metabolism; UMP biosynthesis via salvage pathway; UMP from uracil: step 1/1. With respect to regulation, allosterically activated by GTP. Binding of GTP leads to 5-time activation of the enzyme. Functionally, catalyzes the conversion of uracil and 5-phospho-alpha-D-ribose 1-diphosphate (PRPP) to UMP and diphosphate. In Toxoplasma gondii, this protein is Uracil phosphoribosyltransferase (uprt).